We begin with the raw amino-acid sequence, 294 residues long: Lipoyl synthase (294 aa).

The [4Fe-4S] cluster site is built by cysteine 35, cysteine 40, cysteine 46, cysteine 61, cysteine 65, cysteine 68, and serine 275. A Radical SAM core domain is found at 46 to 264; sequence CWGGGTATVM…REAGLGLGFR (219 aa).

Belongs to the radical SAM superfamily. Lipoyl synthase family. [4Fe-4S] cluster is required as a cofactor.

It is found in the cytoplasm. The enzyme catalyses [[Fe-S] cluster scaffold protein carrying a second [4Fe-4S](2+) cluster] + N(6)-octanoyl-L-lysyl-[protein] + 2 oxidized [2Fe-2S]-[ferredoxin] + 2 S-adenosyl-L-methionine + 4 H(+) = [[Fe-S] cluster scaffold protein] + N(6)-[(R)-dihydrolipoyl]-L-lysyl-[protein] + 4 Fe(3+) + 2 hydrogen sulfide + 2 5'-deoxyadenosine + 2 L-methionine + 2 reduced [2Fe-2S]-[ferredoxin]. The protein operates within protein modification; protein lipoylation via endogenous pathway; protein N(6)-(lipoyl)lysine from octanoyl-[acyl-carrier-protein]: step 2/2. Functionally, catalyzes the radical-mediated insertion of two sulfur atoms into the C-6 and C-8 positions of the octanoyl moiety bound to the lipoyl domains of lipoate-dependent enzymes, thereby converting the octanoylated domains into lipoylated derivatives. The polypeptide is Lipoyl synthase (Anaeromyxobacter sp. (strain Fw109-5)).